A 311-amino-acid chain; its full sequence is Aspartate carbamoyltransferase catalytic subunit (311 aa).

2 residues coordinate carbamoyl phosphate: Arg55 and Thr56. Lys83 serves as a coordination point for L-aspartate. Carbamoyl phosphate is bound by residues Arg105, His133, and Gln136. Positions 166 and 220 each coordinate L-aspartate. 2 residues coordinate carbamoyl phosphate: Gly261 and Pro262.

Belongs to the aspartate/ornithine carbamoyltransferase superfamily. ATCase family. In terms of assembly, heterododecamer (2C3:3R2) of six catalytic PyrB chains organized as two trimers (C3), and six regulatory PyrI chains organized as three dimers (R2).

It catalyses the reaction carbamoyl phosphate + L-aspartate = N-carbamoyl-L-aspartate + phosphate + H(+). It functions in the pathway pyrimidine metabolism; UMP biosynthesis via de novo pathway; (S)-dihydroorotate from bicarbonate: step 2/3. Its function is as follows. Catalyzes the condensation of carbamoyl phosphate and aspartate to form carbamoyl aspartate and inorganic phosphate, the committed step in the de novo pyrimidine nucleotide biosynthesis pathway. The sequence is that of Aspartate carbamoyltransferase catalytic subunit from Chlorobium chlorochromatii (strain CaD3).